The chain runs to 206 residues: Orotate phosphoribosyltransferase (206 aa).

5-phospho-alpha-D-ribose 1-diphosphate contacts are provided by residues Arg-114, Lys-115, Lys-118, His-120, and Glu-141–Ser-149. The orotate site is built by Thr-145 and Arg-173.

This sequence belongs to the purine/pyrimidine phosphoribosyltransferase family. PyrE subfamily. Homodimer. It depends on Mg(2+) as a cofactor.

The catalysed reaction is orotidine 5'-phosphate + diphosphate = orotate + 5-phospho-alpha-D-ribose 1-diphosphate. It functions in the pathway pyrimidine metabolism; UMP biosynthesis via de novo pathway; UMP from orotate: step 1/2. Its function is as follows. Catalyzes the transfer of a ribosyl phosphate group from 5-phosphoribose 1-diphosphate to orotate, leading to the formation of orotidine monophosphate (OMP). The polypeptide is Orotate phosphoribosyltransferase (Nostoc sp. (strain PCC 7120 / SAG 25.82 / UTEX 2576)).